A 416-amino-acid polypeptide reads, in one-letter code: Choline/ethanolaminephosphotransferase 1 (416 aa).

The segment at 1-20 (MSGHRSTRKRCGDSHPESPV) is disordered. Residue Ser-18 is modified to Phosphoserine. Phosphothreonine is present on Thr-40. Asn-86 lines the CDP-choline pocket. Helical transmembrane passes span 89–108 (TIIG…FYCP) and 116–133 (LWAY…QSLD). Asp-133 serves as a coordination point for Mg(2+). N-linked (GlcNAc...) asparagine glycosylation occurs at Asn-144. Glu-151 provides a ligand contact to CDP-choline. Asp-154 contributes to the Mg(2+) binding site. The active-site Proton acceptor is His-155. 8 helical membrane passes run 156–176 (GCDS…VQLG), 180–199 (DWMF…AHWQ), 210–230 (IIDV…AVIG), 246–267 (MKIF…NYFR), 286–306 (VLSP…IYKK), 315–334 (HPCL…TNKL), 349–363 (TAFI…DQYF), and 368–388 (DEYI…IRYC). Asp-158 provides a ligand contact to Mg(2+).

Belongs to the CDP-alcohol phosphatidyltransferase class-I family. In terms of assembly, homodimer. It depends on Mg(2+) as a cofactor. Requires Mn(2+) as cofactor. Ubiquitously expressed.

Its subcellular location is the endoplasmic reticulum membrane. The protein resides in the nucleus membrane. It catalyses the reaction CDP-ethanolamine + a 1,2-diacyl-sn-glycerol = a 1,2-diacyl-sn-glycero-3-phosphoethanolamine + CMP + H(+). The catalysed reaction is CDP-choline + a 1,2-diacyl-sn-glycerol = a 1,2-diacyl-sn-glycero-3-phosphocholine + CMP + H(+). The enzyme catalyses 1-O-alkyl-2-acyl-sn-glycerol + CDP-choline = a 1-O-alkyl-2-acyl-sn-glycero-3-phosphocholine + CMP + H(+). It carries out the reaction a 1-O-(1Z-alkenyl)-2-acyl-sn-glycerol + CDP-choline = a 1-O-(1Z-alkenyl)-2-acyl-sn-glycero-3-phosphocholine + CMP + H(+). It catalyses the reaction 1,2-dioctanoyl-sn-glycerol + CDP-choline = 1,2-dioctanoyl-sn-glycero-3-phosphocholine + CMP + H(+). The catalysed reaction is 1,2-didecanoyl-sn-glycerol + CDP-choline = 1,2-didecanoyl-sn-glycero-3-phosphocholine + CMP + H(+). The enzyme catalyses CDP-choline + 1,2-di-(9Z-octadecenoyl)-sn-glycerol = 1,2-di-(9Z-octadecenoyl)-sn-glycero-3-phosphocholine + CMP + H(+). It carries out the reaction 1-hexadecanoyl-2-(9Z-octadecenoyl)-sn-glycerol + CDP-choline = 1-hexadecanoyl-2-(9Z-octadecenoyl)-sn-glycero-3-phosphocholine + CMP + H(+). It catalyses the reaction CDP-ethanolamine + 1,2-di-(9Z-octadecenoyl)-sn-glycerol = 1,2-di-(9Z-octadecenoyl)-sn-glycero-3-phosphoethanolamine + CMP + H(+). The catalysed reaction is 1-hexadecanoyl-2-(9Z-octadecenoyl)-sn-glycerol + CDP-ethanolamine = 1-hexadecanoyl-2-(9Z-octadecenoyl)-sn-glycero-3-phosphoethanolamine + CMP + H(+). The enzyme catalyses 1-hexadecanoyl-2-(4Z,7Z,10Z,13Z,16Z,19Z-docosahexaenoyl)-sn-glycerol + CDP-choline = 1-hexadecanoyl-2-(4Z,7Z,10Z,13Z,16Z,19Z-docosahexaenoyl)-sn-glycero-3-phosphocholine + CMP + H(+). It carries out the reaction 1,2-di-(9Z-hexadecenoyl)-sn-glycerol + CDP-choline = 1,2-di-(9Z-hexadecenoyl)-sn-glycero-3-phosphocholine + CMP + H(+). It catalyses the reaction 1,2-di-(9Z-hexadecenoyl)-sn-glycerol + CDP-ethanolamine = 1,2-di-(9Z-hexadecenoyl)-sn-glycero-3-phosphoethanolamine + CMP + H(+). The catalysed reaction is 1-O-hexadecyl-2-acetyl-sn-glycerol + CDP-choline = 1-O-hexadecyl-2-acetyl-sn-glycero-3-phosphocholine + CMP + H(+). The enzyme catalyses 1-O-hexadecyl-2-(5Z,8Z,11Z,14Z-eicosatetraenoyl)-sn-glycerol + CDP-choline = 1-O-hexadecyl-2-(5Z,8Z,11Z,14Z)-eicosatetraenoyl-sn-glycero-3-phosphocholine + CMP + H(+). Its pathway is phospholipid metabolism; phosphatidylethanolamine biosynthesis; phosphatidylethanolamine from ethanolamine: step 3/3. It functions in the pathway phospholipid metabolism; phosphatidylcholine biosynthesis; phosphatidylcholine from phosphocholine: step 2/2. In terms of biological role, catalyzes both phosphatidylcholine and phosphatidylethanolamine biosynthesis from CDP-choline and CDP-ethanolamine, respectively. Involved in protein-dependent process of phospholipid transport to distribute phosphatidyl choline to the lumenal surface. Has a higher cholinephosphotransferase activity than ethanolaminephosphotransferase activity. The chain is Choline/ethanolaminephosphotransferase 1 from Homo sapiens (Human).